Here is a 491-residue protein sequence, read N- to C-terminus: Aspartyl/glutamyl-tRNA(Asn/Gln) amidotransferase subunit B (491 aa).

The protein belongs to the GatB/GatE family. GatB subfamily. Heterotrimer of A, B and C subunits.

It catalyses the reaction L-glutamyl-tRNA(Gln) + L-glutamine + ATP + H2O = L-glutaminyl-tRNA(Gln) + L-glutamate + ADP + phosphate + H(+). It carries out the reaction L-aspartyl-tRNA(Asn) + L-glutamine + ATP + H2O = L-asparaginyl-tRNA(Asn) + L-glutamate + ADP + phosphate + 2 H(+). In terms of biological role, allows the formation of correctly charged Asn-tRNA(Asn) or Gln-tRNA(Gln) through the transamidation of misacylated Asp-tRNA(Asn) or Glu-tRNA(Gln) in organisms which lack either or both of asparaginyl-tRNA or glutaminyl-tRNA synthetases. The reaction takes place in the presence of glutamine and ATP through an activated phospho-Asp-tRNA(Asn) or phospho-Glu-tRNA(Gln). This is Aspartyl/glutamyl-tRNA(Asn/Gln) amidotransferase subunit B from Burkholderia multivorans (strain ATCC 17616 / 249).